The primary structure comprises 97 residues: U-reduvitoxin-Pr11a (97 aa).

Residues 1-20 (MKTALFLVFALAFIAVEGKM) form the signal peptide. Pacifastin domains are found at residues 22–59 (RACS…CPPR) and 62–97 (EKSC…KLCL). Intrachain disulfides connect C24/C42, C37/C56, and C40/C51. The pro-Pro-Arg motif necessary for proteolytic processing stretch occupies residues 57–59 (PPR). Disulfide bonds link C65-C82, C77-C96, and C80-C91.

This sequence belongs to the protease inhibitor I19 family. In terms of tissue distribution, expressed by the venom gland.

The protein localises to the secreted. Functionally, inhibits trypsin activity and prophenoloxidase (PPO) activation, an enzyme essential for both clotting and insect innate immune responses. It does not inhibit activity of chymotrypsin and protease K, and has no effect on phenoloxidase (PO) activity. This chain is U-reduvitoxin-Pr11a, found in Platymeris rhadamanthus (Red spot assassin bug).